We begin with the raw amino-acid sequence, 593 residues long: Proteasome-associated ATPase (593 aa).

A coiled-coil region spans residues 5-94 (DDADSRAARW…KEEIDRLAQP (90 aa)). Residue 281-286 (GCGKTL) coordinates ATP. A disordered region spans residues 574–593 (GKGADAGRSIETASNTGQYL). The segment covering 584-593 (ETASNTGQYL) has biased composition (polar residues). The tract at residues 592-593 (YL) is docks into pockets in the proteasome alpha-ring.

It belongs to the AAA ATPase family. Homohexamer. Assembles into a hexameric ring structure that caps the 20S proteasome core. Strongly interacts with the prokaryotic ubiquitin-like protein Pup through a hydrophobic interface; the interacting region of ARC lies in its N-terminal coiled-coil domain. There is one Pup binding site per ARC hexamer ring. Upon ATP-binding, the C-terminus of ARC interacts with the alpha-rings of the proteasome core, possibly by binding to the intersubunit pockets.

Its pathway is protein degradation; proteasomal Pup-dependent pathway. Its function is as follows. ATPase which is responsible for recognizing, binding, unfolding and translocation of pupylated proteins into the bacterial 20S proteasome core particle. May be essential for opening the gate of the 20S proteasome via an interaction with its C-terminus, thereby allowing substrate entry and access to the site of proteolysis. Thus, the C-termini of the proteasomal ATPase may function like a 'key in a lock' to induce gate opening and therefore regulate proteolysis. This Salinispora arenicola (strain CNS-205) protein is Proteasome-associated ATPase.